We begin with the raw amino-acid sequence, 701 residues long: Polyribonucleotide nucleotidyltransferase (701 aa).

Positions 487 and 493 each coordinate Mg(2+). Residues 554 to 613 (PTMLAMKIDQDKIRDVIGKGGATIRAICEETKASIDIEDDGSIKIFGETKEAAEAAKQRV) form the KH domain. The S1 motif domain maps to 623-691 (GKIYVGKVER…NRGRIKLSIK (69 aa)).

Belongs to the polyribonucleotide nucleotidyltransferase family. In terms of assembly, component of the RNA degradosome, which is a multiprotein complex involved in RNA processing and mRNA degradation. It depends on Mg(2+) as a cofactor.

Its subcellular location is the cytoplasm. It carries out the reaction RNA(n+1) + phosphate = RNA(n) + a ribonucleoside 5'-diphosphate. Functionally, involved in mRNA degradation. Catalyzes the phosphorolysis of single-stranded polyribonucleotides processively in the 3'- to 5'-direction. In Stutzerimonas stutzeri (strain A1501) (Pseudomonas stutzeri), this protein is Polyribonucleotide nucleotidyltransferase.